Here is a 90-residue protein sequence, read N- to C-terminus: Small ribosomal subunit protein bS20 (90 aa).

Residues 1 to 15 show a composition bias toward basic residues; the sequence is MANHKSAQKRIRQTK. Positions 1 to 22 are disordered; sequence MANHKSAQKRIRQTKTRTERNR.

It belongs to the bacterial ribosomal protein bS20 family.

Its function is as follows. Binds directly to 16S ribosomal RNA. This Helicobacter hepaticus (strain ATCC 51449 / 3B1) protein is Small ribosomal subunit protein bS20.